We begin with the raw amino-acid sequence, 1333 residues long: Protein CLASP-1 (1333 aa).

One copy of the HEAT 1 repeat lies at 168–206 (LIPQLCRLTNDPNSEVRDASTNCLVDLMVFGGKSIIAKI). The segment covering 269–305 (STTSFTSSARLSTPPRTNAPSLSPSPSTPSPLSLPAA) has biased composition (low complexity). The segment at 269–311 (STTSFTSSARLSTPPRTNAPSLSPSPSTPSPLSLPAANGRSRD) is disordered. The stretch at 360–389 (SNSDVREKLETANSVLRNANEDWSKRANQL) forms a coiled coil. 2 disordered regions span residues 579–711 (QKML…HQTP) and 764–792 (TPPK…NSSN). Residues 601–611 (NQKQPQQPQQN) are compositionally biased toward low complexity. Residues 612–644 (ISQKFLSQRSASALDNKSQVLSIAKPQQSNPSR) are compositionally biased toward polar residues. Low complexity-rich tracts occupy residues 657-669 (SSTS…VRSS) and 686-707 (TNFN…STST). One copy of the HEAT 2 repeat lies at 1266-1304 (VAPCFVSAYDSTSSSVRKCAVFGLVALVQRVGMPRLETH).

It belongs to the CLASP family.

It is found in the cytoplasm. Its subcellular location is the cytoskeleton. Its function is as follows. Microtubule plus-end tracking protein that promotes the stabilization of dynamic microtubules. The polypeptide is Protein CLASP-1 (Caenorhabditis briggsae).